Here is a 253-residue protein sequence, read N- to C-terminus: Ubiquinone biosynthesis O-methyltransferase (253 aa).

4 residues coordinate S-adenosyl-L-methionine: Arg-47, Gly-78, Asp-99, and Met-141.

This sequence belongs to the methyltransferase superfamily. UbiG/COQ3 family.

The catalysed reaction is a 3-demethylubiquinol + S-adenosyl-L-methionine = a ubiquinol + S-adenosyl-L-homocysteine + H(+). It catalyses the reaction a 3-(all-trans-polyprenyl)benzene-1,2-diol + S-adenosyl-L-methionine = a 2-methoxy-6-(all-trans-polyprenyl)phenol + S-adenosyl-L-homocysteine + H(+). It functions in the pathway cofactor biosynthesis; ubiquinone biosynthesis. O-methyltransferase that catalyzes the 2 O-methylation steps in the ubiquinone biosynthetic pathway. This Rhodopseudomonas palustris (strain HaA2) protein is Ubiquinone biosynthesis O-methyltransferase.